The sequence spans 191 residues: Apoptosis regulator BHRF1 (191 aa).

The segment at 1 to 18 (MAYSTREILLALCIRDSR) is interaction with host VRK2. A glycan (N-linked (GlcNAc...) asparagine; by host) is linked at asparagine 22. Positions 89–109 (EIFHRGDPSLGRALAWMAWCM) match the BH1 motif. The tract at residues 89 to 142 (EIFHRGDPSLGRALAWMAWCMHACRTLCCNQSTPYYVVDLSVRGMLEASEGLDG) is interaction with host VRK2. Asparagine 118 carries N-linked (GlcNAc...) asparagine; by host glycosylation. Residues 142-157 (GWIHQQGGWSTLIEDN) carry the BH2 motif. A helical transmembrane segment spans residues 166–186 (WTLFLAGLTLSLLVICSYLFI).

It belongs to the Bcl-2 family. In terms of assembly, interacts with isoform 1 of host VRK2; this interaction is involved in protecting cells from apoptosis. Interacts with host PRA1; this interaction seems to modulate BHRF1 anti-apoptotic activity. Interacts with host BCL2L11. Interacts with host BAD and BBC3. Interacts with BALF1; BALF1 acting as a negative regulator of the survival function of BHRF1. Interacts with host BECN1.

It localises to the host membrane. The protein resides in the host mitochondrion. Its function is as follows. Prevents premature death of the host cell during virus production, which would otherwise reduce the amount of progeny virus. Acts as a host B-cell leukemia/lymphoma 2 (Bcl-2) homolog, and interacts with pro-apoptotic proteins to prevent mitochondria permeabilization, release of cytochrome c and subsequent apoptosis of the host cell. In addition, plays a role in the inhibiton of host BECN1-mediated starvation-induced autophagy without affecting basal levels of autophagy. The polypeptide is Apoptosis regulator BHRF1 (Homo sapiens (Human)).